The following is a 276-amino-acid chain: NADPH-dependent 7-cyano-7-deazaguanine reductase (276 aa).

Position 83-85 (83-85 (IES)) interacts with substrate. 85–86 (SK) lines the NADPH pocket. The active-site Thioimide intermediate is Cys184. Residue Asp191 is the Proton donor of the active site. 223-224 (HE) is a substrate binding site. 252–253 (RG) provides a ligand contact to NADPH.

It belongs to the GTP cyclohydrolase I family. QueF type 2 subfamily. In terms of assembly, homodimer.

Its subcellular location is the cytoplasm. It carries out the reaction 7-aminomethyl-7-carbaguanine + 2 NADP(+) = 7-cyano-7-deazaguanine + 2 NADPH + 3 H(+). It functions in the pathway tRNA modification; tRNA-queuosine biosynthesis. In terms of biological role, catalyzes the NADPH-dependent reduction of 7-cyano-7-deazaguanine (preQ0) to 7-aminomethyl-7-deazaguanine (preQ1). The sequence is that of NADPH-dependent 7-cyano-7-deazaguanine reductase from Pseudomonas syringae pv. syringae (strain B728a).